We begin with the raw amino-acid sequence, 360 residues long: A-type ATP synthase subunit C (360 aa).

The segment at 1–25 (MRLLEKLWGQKPSRKSDKKKNGTSN) is disordered.

It belongs to the V-ATPase V0D/AC39 subunit family. Has multiple subunits with at least A(3), B(3), C, D, E, F, H, I and proteolipid K(x).

It is found in the cell membrane. Functionally, component of the A-type ATP synthase that produces ATP from ADP in the presence of a proton gradient across the membrane. This chain is A-type ATP synthase subunit C, found in Methanosarcina barkeri (strain Fusaro / DSM 804).